The primary structure comprises 244 residues: Small ribosomal subunit protein eS4 (244 aa).

The S4 RNA-binding domain occupies 43 to 106; that stretch reads LPLLLIVRDT…NENYLVLFDE (64 aa).

It belongs to the eukaryotic ribosomal protein eS4 family.

In Methanococcus vannielii, this protein is Small ribosomal subunit protein eS4 (rps4e).